The following is a 179-amino-acid chain: Large ribosomal subunit protein uL5 (179 aa).

It belongs to the universal ribosomal protein uL5 family. As to quaternary structure, part of the 50S ribosomal subunit; part of the 5S rRNA/L5/L18/L25 subcomplex. Contacts the 5S rRNA and the P site tRNA. Forms a bridge to the 30S subunit in the 70S ribosome.

This is one of the proteins that bind and probably mediate the attachment of the 5S RNA into the large ribosomal subunit, where it forms part of the central protuberance. In the 70S ribosome it contacts protein S13 of the 30S subunit (bridge B1b), connecting the 2 subunits; this bridge is implicated in subunit movement. Contacts the P site tRNA; the 5S rRNA and some of its associated proteins might help stabilize positioning of ribosome-bound tRNAs. The chain is Large ribosomal subunit protein uL5 from Alkalilimnicola ehrlichii (strain ATCC BAA-1101 / DSM 17681 / MLHE-1).